The primary structure comprises 280 residues: 2-dehydro-3-deoxyphosphooctonate aldolase (280 aa).

It belongs to the KdsA family.

The protein resides in the cytoplasm. The catalysed reaction is D-arabinose 5-phosphate + phosphoenolpyruvate + H2O = 3-deoxy-alpha-D-manno-2-octulosonate-8-phosphate + phosphate. It participates in carbohydrate biosynthesis; 3-deoxy-D-manno-octulosonate biosynthesis; 3-deoxy-D-manno-octulosonate from D-ribulose 5-phosphate: step 2/3. The protein operates within bacterial outer membrane biogenesis; lipopolysaccharide biosynthesis. This Coxiella burnetii (strain CbuG_Q212) (Coxiella burnetii (strain Q212)) protein is 2-dehydro-3-deoxyphosphooctonate aldolase.